The following is a 310-amino-acid chain: Aspartate carbamoyltransferase catalytic subunit (310 aa).

2 residues coordinate carbamoyl phosphate: arginine 58 and threonine 59. An L-aspartate-binding site is contributed by lysine 86. Arginine 108, histidine 137, and glutamine 140 together coordinate carbamoyl phosphate. L-aspartate is bound by residues arginine 170 and arginine 225. Glycine 264 and proline 265 together coordinate carbamoyl phosphate.

The protein belongs to the aspartate/ornithine carbamoyltransferase superfamily. ATCase family. Heterododecamer (2C3:3R2) of six catalytic PyrB chains organized as two trimers (C3), and six regulatory PyrI chains organized as three dimers (R2).

The enzyme catalyses carbamoyl phosphate + L-aspartate = N-carbamoyl-L-aspartate + phosphate + H(+). The protein operates within pyrimidine metabolism; UMP biosynthesis via de novo pathway; (S)-dihydroorotate from bicarbonate: step 2/3. In terms of biological role, catalyzes the condensation of carbamoyl phosphate and aspartate to form carbamoyl aspartate and inorganic phosphate, the committed step in the de novo pyrimidine nucleotide biosynthesis pathway. The chain is Aspartate carbamoyltransferase catalytic subunit from Coxiella burnetii (strain CbuG_Q212) (Coxiella burnetii (strain Q212)).